The following is a 2251-amino-acid chain: U3 small nucleolar RNA-associated protein 10 (2251 aa).

The stretch at Val945–Lys983 is one HEAT repeat. 2 consecutive transmembrane segments (helical) span residues Leu962–Ala982 and Leu1460–Asp1480.

The protein belongs to the HEATR1/UTP10 family. As to quaternary structure, component of the ribosomal small subunit (SSU) processome.

The protein localises to the nucleus. Its subcellular location is the nucleolus. It localises to the membrane. Its function is as follows. Involved in nucleolar processing of pre-18S ribosomal RNA. Involved in ribosome biosynthesis. This Mycosarcoma maydis (Corn smut fungus) protein is U3 small nucleolar RNA-associated protein 10.